The sequence spans 507 residues: Maturase K (507 aa).

It belongs to the intron maturase 2 family. MatK subfamily.

The protein localises to the plastid. The protein resides in the chloroplast. In terms of biological role, usually encoded in the trnK tRNA gene intron. Probably assists in splicing its own and other chloroplast group II introns. The chain is Maturase K from Craterostigma plantagineum (Blue gem).